The sequence spans 424 residues: Serine hydroxymethyltransferase (424 aa).

Residues leucine 113 and 117–119 each bind (6S)-5,6,7,8-tetrahydrofolate; that span reads GHL. Lysine 222 carries the post-translational modification N6-(pyridoxal phosphate)lysine. Residue 361-363 participates in (6S)-5,6,7,8-tetrahydrofolate binding; it reads SPF.

The protein belongs to the SHMT family. As to quaternary structure, homodimer. It depends on pyridoxal 5'-phosphate as a cofactor.

It localises to the cytoplasm. The catalysed reaction is (6R)-5,10-methylene-5,6,7,8-tetrahydrofolate + glycine + H2O = (6S)-5,6,7,8-tetrahydrofolate + L-serine. It participates in one-carbon metabolism; tetrahydrofolate interconversion. It functions in the pathway amino-acid biosynthesis; glycine biosynthesis; glycine from L-serine: step 1/1. Its function is as follows. Catalyzes the reversible interconversion of serine and glycine with tetrahydrofolate (THF) serving as the one-carbon carrier. This reaction serves as the major source of one-carbon groups required for the biosynthesis of purines, thymidylate, methionine, and other important biomolecules. Also exhibits THF-independent aldolase activity toward beta-hydroxyamino acids, producing glycine and aldehydes, via a retro-aldol mechanism. The protein is Serine hydroxymethyltransferase of Flavobacterium psychrophilum (strain ATCC 49511 / DSM 21280 / CIP 103535 / JIP02/86).